We begin with the raw amino-acid sequence, 441 residues long: Maltose-6'-phosphate glucosidase (441 aa).

An NAD(+)-binding site is contributed by 4-70; that stretch reads FSILIAGGGS…PQIKFSYSTN (67 aa). The substrate site is built by Arg-93 and Asn-147. Residue Cys-169 coordinates Mn(2+). Catalysis depends on Asp-170, which acts as the Proton donor. His-200 serves as a coordination point for Mn(2+). Tyr-264 serves as the catalytic Proton acceptor. Residue Arg-284 participates in substrate binding.

Belongs to the glycosyl hydrolase 4 family. As to quaternary structure, homotetramer. The cofactor is NAD(+). Requires Mn(2+) as cofactor. Fe(2+) is required as a cofactor. It depends on Co(2+) as a cofactor. Ni(2+) serves as cofactor.

It catalyses the reaction alpha-maltose 6'-phosphate + H2O = D-glucose 6-phosphate + D-glucose. The protein operates within glycan degradation; maltose degradation. In terms of biological role, hydrolyzes a wide variety of 6-phospho-alpha-D-glucosides including maltose-6'P, trehalose-6P and the 6'-phosphorylated derivatives of the five linkage-isomeric alpha-D-glucosyl-D-fructoses: trehalulose-6'P, turanose-6'P, maltulose-6'P, leucrose-6'P, and palatinose-6'P. However, sucrose-6P is not a substrate for MalH, and this enzyme also fails to hydrolyze beta-O-linked phosphorylated disaccharides such as cellobiose-6'P and gentobiose-6'P. In Fusobacterium mortiferum, this protein is Maltose-6'-phosphate glucosidase (malH).